Consider the following 344-residue polypeptide: MERFRPLLNKVAMGTALNRDEAAYAFDKMMSGETTPSQMGALLMGLRVRGETVDEIVGAVSVMRAKMLTVDAPVGSVDVVGTGGDASGSYNISTCASFIVAGAGVPVAKHGNRALSSKSGAADVLAALGVRIDLAPAAISRCIAETGIGFMFAPTHHPAMKNVGPTRVELGTRTIFNLLGPLSNPAGVKRQMVGVFAKAWLSPLAEVLKALGSERAWVVHGSDGLDEITISGTTDVASLEDGRVHTFEISPEDVGLTRAAPEALRGGDAEHNAAALRAVLEGAPGAYRDVAVMNAGAALLISGRAASLRDGVDMAKASIDSGAAKAKLDQLARATQALAPQVDA.

5-phospho-alpha-D-ribose 1-diphosphate is bound by residues Gly81, 84–85 (GD), Ser89, 91–94 (NIST), 109–117 (KHGNRALSS), and Ala121. Gly81 serves as a coordination point for anthranilate. Residue Ser93 coordinates Mg(2+). Asn112 is a binding site for anthranilate. Arg167 contacts anthranilate. The Mg(2+) site is built by Asp226 and Glu227.

It belongs to the anthranilate phosphoribosyltransferase family. In terms of assembly, homodimer. Requires Mg(2+) as cofactor.

The enzyme catalyses N-(5-phospho-beta-D-ribosyl)anthranilate + diphosphate = 5-phospho-alpha-D-ribose 1-diphosphate + anthranilate. It participates in amino-acid biosynthesis; L-tryptophan biosynthesis; L-tryptophan from chorismate: step 2/5. Catalyzes the transfer of the phosphoribosyl group of 5-phosphorylribose-1-pyrophosphate (PRPP) to anthranilate to yield N-(5'-phosphoribosyl)-anthranilate (PRA). The sequence is that of Anthranilate phosphoribosyltransferase from Azorhizobium caulinodans (strain ATCC 43989 / DSM 5975 / JCM 20966 / LMG 6465 / NBRC 14845 / NCIMB 13405 / ORS 571).